A 229-amino-acid polypeptide reads, in one-letter code: Aspartate-rich protein 1 (229 aa).

The segment at 84–106 (SEEDNDDAKILPSPVQGSSEDNL) is disordered.

The chain is Aspartate-rich protein 1 (DRICH1) from Homo sapiens (Human).